The following is a 345-amino-acid chain: Anthranilate phosphoribosyltransferase (345 aa).

5-phospho-alpha-D-ribose 1-diphosphate-binding positions include glycine 84, 87–88 (GD), threonine 92, 94–97 (NIST), 112–120 (KHGNRSVSS), and serine 124. Residue glycine 84 coordinates anthranilate. Residue serine 96 participates in Mg(2+) binding. An anthranilate-binding site is contributed by asparagine 115. Anthranilate is bound at residue arginine 170. Mg(2+) contacts are provided by aspartate 229 and glutamate 230.

The protein belongs to the anthranilate phosphoribosyltransferase family. Homodimer. The cofactor is Mg(2+).

The enzyme catalyses N-(5-phospho-beta-D-ribosyl)anthranilate + diphosphate = 5-phospho-alpha-D-ribose 1-diphosphate + anthranilate. It participates in amino-acid biosynthesis; L-tryptophan biosynthesis; L-tryptophan from chorismate: step 2/5. In terms of biological role, catalyzes the transfer of the phosphoribosyl group of 5-phosphorylribose-1-pyrophosphate (PRPP) to anthranilate to yield N-(5'-phosphoribosyl)-anthranilate (PRA). The chain is Anthranilate phosphoribosyltransferase from Xanthomonas oryzae pv. oryzae (strain MAFF 311018).